The following is a 234-amino-acid chain: HTH-type transcriptional regulator MT1864 (234 aa).

The HTH tetR-type domain maps to 15-75 (EQIEAKIVEL…LLLVDAYSDL (61 aa)). Positions 38–57 (SLRAIARNLGMVSSAVYRYV) form a DNA-binding region, H-T-H motif.

In terms of assembly, homodimer.

It is found in the cytoplasm. Functionally, may participate in the regulatory network that controls the expression of MmpL lipid transporters. This Mycobacterium tuberculosis (strain CDC 1551 / Oshkosh) protein is HTH-type transcriptional regulator MT1864.